The primary structure comprises 122 residues: Large ribosomal subunit protein bL19 (122 aa).

The protein belongs to the bacterial ribosomal protein bL19 family.

Its function is as follows. This protein is located at the 30S-50S ribosomal subunit interface and may play a role in the structure and function of the aminoacyl-tRNA binding site. The sequence is that of Large ribosomal subunit protein bL19 from Acinetobacter baumannii (strain AB307-0294).